Here is a 608-residue protein sequence, read N- to C-terminus: Chaperone protein DnaK (608 aa).

Threonine 174 is modified (phosphothreonine; by autocatalysis). A compositionally biased stretch (basic and acidic residues) spans tyrosine 493–glutamate 505. Disordered stretches follow at residues tyrosine 493 to valine 514 and glycine 577 to lysine 608. The segment covering glycine 577 to glycine 590 has biased composition (low complexity). Over residues alanine 599–lysine 608 the composition is skewed to basic and acidic residues.

The protein belongs to the heat shock protein 70 family.

Its function is as follows. Acts as a chaperone. The polypeptide is Chaperone protein DnaK (Acetivibrio thermocellus (strain ATCC 27405 / DSM 1237 / JCM 9322 / NBRC 103400 / NCIMB 10682 / NRRL B-4536 / VPI 7372) (Clostridium thermocellum)).